Consider the following 227-residue polypeptide: PKHD-type hydroxylase CC_0027 (227 aa).

Positions 78–178 constitute a Fe2OG dioxygenase domain; sequence TILSPMFNRY…RTASFFWIQS (101 aa). Fe cation is bound by residues His-96, Asp-98, and His-159. Residue Arg-169 coordinates 2-oxoglutarate.

The cofactor is Fe(2+). Requires L-ascorbate as cofactor.

The chain is PKHD-type hydroxylase CC_0027 from Caulobacter vibrioides (strain ATCC 19089 / CIP 103742 / CB 15) (Caulobacter crescentus).